Reading from the N-terminus, the 193-residue chain is Naphthalene 1,2-dioxygenase system, small oxygenase component (193 aa).

The protein belongs to the bacterial ring-hydroxylating dioxygenase beta subunit family. In terms of assembly, the naphthalene dioxygenase (NDO) multicomponent enzyme system is composed of an electron transfer component and a dioxygenase component (iron sulfur protein (ISP)). The electron transfer component is composed of a ferredoxin reductase (NdoR) and a ferredoxin (NdoA), and the dioxygenase component is formed of a heterohexamer (trimer of heterodimers) of three large alpha subunits (NdoB) and three small beta subunits (NdoC).

It participates in aromatic compound metabolism; naphthalene degradation. In terms of biological role, component of the naphthalene dioxygenase (NDO) multicomponent enzyme system which catalyzes the incorporation of both atoms of molecular oxygen into naphthalene to form cis-(1R,2S)-dihydroxy-1,2-dihydronaphthalene. The beta subunit seems to have a structural role in the holoenzyme. The protein is Naphthalene 1,2-dioxygenase system, small oxygenase component of Pseudomonas aeruginosa.